Consider the following 561-residue polypeptide: Urocanate hydratase (561 aa).

NAD(+)-binding positions include 52-53, Q130, 176-178, E196, R201, 242-243, 263-267, 273-274, and Y322; these read GG, GMG, NA, QTSAH, and YL. Residue C410 is part of the active site. G492 provides a ligand contact to NAD(+).

It belongs to the urocanase family. NAD(+) is required as a cofactor.

It is found in the cytoplasm. It carries out the reaction 4-imidazolone-5-propanoate = trans-urocanate + H2O. It functions in the pathway amino-acid degradation; L-histidine degradation into L-glutamate; N-formimidoyl-L-glutamate from L-histidine: step 2/3. Its function is as follows. Catalyzes the conversion of urocanate to 4-imidazolone-5-propionate. The protein is Urocanate hydratase of Salmonella choleraesuis (strain SC-B67).